The chain runs to 128 residues: Large ribosomal subunit protein bL17 (128 aa).

Belongs to the bacterial ribosomal protein bL17 family. As to quaternary structure, part of the 50S ribosomal subunit. Contacts protein L32.

The chain is Large ribosomal subunit protein bL17 from Vibrio cholerae serotype O1 (strain ATCC 39541 / Classical Ogawa 395 / O395).